Here is a 202-residue protein sequence, read N- to C-terminus: Type II restriction enzyme MthZI (202 aa).

It catalyses the reaction Endonucleolytic cleavage of DNA to give specific double-stranded fragments with terminal 5'-phosphates.. In terms of biological role, a P subtype restriction enzyme that recognizes the double-stranded sequence 5'-CTAG-3' and cleaves after C-1. This chain is Type II restriction enzyme MthZI, found in Methanothermobacter thermautotrophicus (Methanobacterium thermoformicicum).